We begin with the raw amino-acid sequence, 211 residues long: Pyridoxine/pyridoxamine 5'-phosphate oxidase (211 aa).

Substrate-binding positions include 7–10 (RREY) and K65. Residues 60-65 (RIVLLK), 75-76 (YT), R81, K82, and Q104 contribute to the FMN site. Substrate-binding residues include Y122, R126, and S130. FMN-binding positions include 139–140 (QS) and W184. Position 190–192 (190–192 (RLH)) interacts with substrate. R194 is a binding site for FMN.

The protein belongs to the pyridoxamine 5'-phosphate oxidase family. Homodimer. The cofactor is FMN.

It carries out the reaction pyridoxamine 5'-phosphate + O2 + H2O = pyridoxal 5'-phosphate + H2O2 + NH4(+). The enzyme catalyses pyridoxine 5'-phosphate + O2 = pyridoxal 5'-phosphate + H2O2. Its pathway is cofactor metabolism; pyridoxal 5'-phosphate salvage; pyridoxal 5'-phosphate from pyridoxamine 5'-phosphate: step 1/1. It participates in cofactor metabolism; pyridoxal 5'-phosphate salvage; pyridoxal 5'-phosphate from pyridoxine 5'-phosphate: step 1/1. Its function is as follows. Catalyzes the oxidation of either pyridoxine 5'-phosphate (PNP) or pyridoxamine 5'-phosphate (PMP) into pyridoxal 5'-phosphate (PLP). The sequence is that of Pyridoxine/pyridoxamine 5'-phosphate oxidase from Vibrio campbellii (strain ATCC BAA-1116).